The chain runs to 146 residues: UPF0260 protein VF_1660 (146 aa).

This sequence belongs to the UPF0260 family.

The polypeptide is UPF0260 protein VF_1660 (Aliivibrio fischeri (strain ATCC 700601 / ES114) (Vibrio fischeri)).